Consider the following 555-residue polypeptide: CTP synthase (555 aa).

The amidoligase domain stretch occupies residues 1–271 (MVKRGKKTKY…DDKLAELFNI (271 aa)). Ser19 serves as a coordination point for CTP. Ser19 contacts UTP. Residues 20–25 (SLGKGL) and Asp77 contribute to the ATP site. Mg(2+)-binding residues include Asp77 and Glu145. Residues 152 to 154 (DIE), 192 to 197 (KTKPTQ), and Lys228 contribute to the CTP site. Residues 192-197 (KTKPTQ) and Lys228 contribute to the UTP site. Residues 297–537 (RIGIVGKYVE…VKAALEHRDA (241 aa)) enclose the Glutamine amidotransferase type-1 domain. Gly358 contacts L-glutamine. Residue Cys385 is the Nucleophile; for glutamine hydrolysis of the active site. L-glutamine-binding positions include 386 to 389 (LGLQ), Glu409, and Arg466. Active-site residues include His510 and Glu512. The tract at residues 536–555 (DAQQRQPSAEVKKLPVGKNG) is disordered.

This sequence belongs to the CTP synthase family. As to quaternary structure, homotetramer.

It carries out the reaction UTP + L-glutamine + ATP + H2O = CTP + L-glutamate + ADP + phosphate + 2 H(+). It catalyses the reaction L-glutamine + H2O = L-glutamate + NH4(+). The enzyme catalyses UTP + NH4(+) + ATP = CTP + ADP + phosphate + 2 H(+). Its pathway is pyrimidine metabolism; CTP biosynthesis via de novo pathway; CTP from UDP: step 2/2. With respect to regulation, allosterically activated by GTP, when glutamine is the substrate; GTP has no effect on the reaction when ammonia is the substrate. The allosteric effector GTP functions by stabilizing the protein conformation that binds the tetrahedral intermediate(s) formed during glutamine hydrolysis. Inhibited by the product CTP, via allosteric rather than competitive inhibition. Catalyzes the ATP-dependent amination of UTP to CTP with either L-glutamine or ammonia as the source of nitrogen. Regulates intracellular CTP levels through interactions with the four ribonucleotide triphosphates. The sequence is that of CTP synthase from Anaeromyxobacter dehalogenans (strain 2CP-C).